The sequence spans 438 residues: Histidine--tRNA ligase (438 aa).

This sequence belongs to the class-II aminoacyl-tRNA synthetase family. As to quaternary structure, homodimer.

It is found in the cytoplasm. It catalyses the reaction tRNA(His) + L-histidine + ATP = L-histidyl-tRNA(His) + AMP + diphosphate + H(+). This is Histidine--tRNA ligase from Aromatoleum aromaticum (strain DSM 19018 / LMG 30748 / EbN1) (Azoarcus sp. (strain EbN1)).